The chain runs to 945 residues: Splicing factor, suppressor of white-apricot homolog (945 aa).

Disordered stretches follow at residues 1–28 (MYGAGGGRAKAERKGGVKEEAGPGGTGT) and 157–190 (YYDPSEPTEEEEPSKQREKSEAENLEENEEPFIA). Composition is skewed to basic and acidic residues over residues 9-21 (AKAERKGGVKEEA) and 169-178 (PSKQREKSEA). Residues 211 to 253 (IIERTANFVCKQGAQFEIMLKAKQARNSQFDFLRFDHYLNPYY) form an SURP motif 1 repeat. The disordered stretch occupies residues 269–298 (AESKSEEKKKSGPTSDNEEEDDEEDGSYLH). Ser-283 is subject to Phosphoserine. A compositionally biased stretch (acidic residues) spans 284–294 (DNEEEDDEEDG). An N6-acetyllysine modification is found at Lys-315. Disordered regions lie at residues 332-355 (KAQADSSAPAPPTADGTPAQPSQV) and 403-438 (SSSPGVTTTVPPPPGTTPPPPPTTAESSSGVTSTTT). Positions 335–352 (ADSSAPAPPTADGTPAQP) are enriched in low complexity. A compositionally biased stretch (pro residues) spans 412 to 425 (VPPPPGTTPPPPPT). The span at 426–438 (TAESSSGVTSTTT) shows a compositional bias: low complexity. The stretch at 458 to 498 (VIDKLAEYVARNGLKFETSVRAKNDQRFEFLQPWHQYNAYY) is one SURP motif 2 repeat. Disordered regions lie at residues 512–566 (GSTQ…TVDG), 589–680 (PLEK…QAER), and 714–921 (GVMP…VQSK). Residues 514–527 (TQAASTAEEAPTET) are compositionally biased toward low complexity. The span at 528-540 (AVEESSEAGEDGA) shows a compositional bias: acidic residues. The segment covering 589–598 (PLEKNRVKLD) has biased composition (basic and acidic residues). 2 positions are modified to phosphoserine: Ser-601 and Ser-621. The span at 615 to 630 (SSVANPSPAAAPPSAV) shows a compositional bias: low complexity. A coiled-coil region spans residues 632-686 (EEKKPQLTQEELEAKQAKQKLEDRLAAAAREKLAQASKESKEKQLQAERKRKAAL). Thr-639 is subject to Phosphothreonine. 2 stretches are compositionally biased toward basic and acidic residues: residues 643–679 (LEAKQAKQKLEDRLAAAAREKLAQASKESKEKQLQAE) and 733–752 (KPPERPSSRCRDPPREEERE). Basic residues-rich tracts occupy residues 753–787 (KKKKKHKKRSRTRSRSPKYHSSSKPRSRSHSKAKH) and 795–810 (TVRRSRSRSRSPRRRA). The segment covering 811–821 (HSPERRREDRS) has biased composition (basic and acidic residues). Residues Ser-829 and Ser-831 each carry the phosphoserine modification. Positions 835-861 (SRKRTRSRSPHEKKKKRRSRSRTKAKA) are enriched in basic residues. Positions 871–894 (QAAQRPSAHSAHSASISPVESRGS) are enriched in low complexity. Over residues 895 to 908 (SQERSRGVSQEKDG) the composition is skewed to basic and acidic residues. Ser-899 and Ser-903 each carry phosphoserine. Low complexity predominate over residues 909–920 (QISSAIVSSVQS).

It localises to the nucleus. Its function is as follows. Plays a role as an alternative splicing regulator. Regulate its own expression at the level of RNA processing. Also regulates the splicing of fibronectin and CD45 genes. May act, at least in part, by interaction with other R/S-containing splicing factors. Represses the splicing of MAPT/Tau exon 10. The chain is Splicing factor, suppressor of white-apricot homolog (Sfswap) from Rattus norvegicus (Rat).